A 494-amino-acid polypeptide reads, in one-letter code: Glycerol kinase (494 aa).

An ADP-binding site is contributed by Thr13. ATP is bound by residues Thr13, Thr14, and Ser15. Thr13 contributes to the sn-glycerol 3-phosphate binding site. Arg17 lines the ADP pocket. Arg83, Glu84, Tyr135, and Asp244 together coordinate sn-glycerol 3-phosphate. Glycerol contacts are provided by Arg83, Glu84, Tyr135, Asp244, and Gln245. ADP contacts are provided by Thr266 and Gly309. Thr266, Gly309, Gln313, and Gly410 together coordinate ATP. ADP contacts are provided by Gly410 and Asn414.

The protein belongs to the FGGY kinase family.

It catalyses the reaction glycerol + ATP = sn-glycerol 3-phosphate + ADP + H(+). Its pathway is polyol metabolism; glycerol degradation via glycerol kinase pathway; sn-glycerol 3-phosphate from glycerol: step 1/1. Its activity is regulated as follows. Inhibited by fructose 1,6-bisphosphate (FBP). Its function is as follows. Key enzyme in the regulation of glycerol uptake and metabolism. Catalyzes the phosphorylation of glycerol to yield sn-glycerol 3-phosphate. In Shewanella baltica (strain OS185), this protein is Glycerol kinase.